We begin with the raw amino-acid sequence, 322 residues long: CMP-sialic acid transporter 1 (322 aa).

At 1–2 (MQ) the chain is on the cytoplasmic side. The chain crosses the membrane as a helical span at residues 3–23 (WYLVAALLTVLTSSQGILTTL). The Lumenal portion of the chain corresponds to 24 to 33 (SQSNGKYKYD). A helical transmembrane segment spans residues 34-54 (YATIPFLAELFKLSFSSFFLW). The Cytoplasmic segment spans residues 55–75 (KECQSSSPPRMTKEWRSIRLY). A helical transmembrane segment spans residues 76-96 (LVPSVIYLIHNNVQFATLTYV). The Lumenal segment spans residues 97–100 (DPST). Residues 101-120 (YQIMGNLKIVTTGILFRLVL) traverse the membrane as a helical segment. At 121–126 (KRKLSN) the chain is on the cytoplasmic side. A helical membrane pass occupies residues 127-144 (LQWMAVVLLAVGTTTSQV). Topologically, residues 145 to 157 (KGCGDAPCDSLFS) are lumenal. Residues 158–178 (APFQGYMLGILSACLSALAGV) traverse the membrane as a helical segment. At 179-198 (YTEYLMKKNNDSLYWQNVQL) the chain is on the cytoplasmic side. A helical membrane pass occupies residues 199 to 219 (YTFGVIFNMGWLIYGDFKAGF). Topologically, residues 220-233 (ERGPWWQRLFNGYS) are lumenal. A helical transmembrane segment spans residues 234 to 254 (ITTWMVVFNLGSTGLLVSWLM). At 255 to 262 (KYSDNIVK) the chain is on the cytoplasmic side. Residues 263–283 (VYSTSMAMLLTMVLSVYLFNV) traverse the membrane as a helical segment. At 284 to 286 (RAT) the chain is on the lumenal side.

The protein belongs to the nucleotide-sugar transporter family. CMP-Sialate:CMP antiporter (TC 2.A.7.12) subfamily. Expressed in roots, leaves and stalks.

The protein resides in the golgi apparatus membrane. Sugar transporter involved in the transport of CMP-sialic acid from the cytoplasm into the Golgi. May transport important nucleotide sugars such as CMP-Kdo (2-keto-3-deoxy-D-manno-octulosonic acid) in physiological conditions. The protein is CMP-sialic acid transporter 1 of Oryza sativa subsp. japonica (Rice).